Here is a 393-residue protein sequence, read N- to C-terminus: 4-hydroxyphenylpyruvate dioxygenase (393 aa).

T2 carries the post-translational modification N-acetylthreonine. VOC domains are found at residues 18 to 149 and 180 to 338; these read HFHS…LVEK and IIDH…IFTK. The residue at position 132 (K132) is an N6-succinyllysine. H183 is a Fe cation binding site. Phosphoserine is present on residues S211, S226, and S250. H266 and E349 together coordinate Fe cation.

It belongs to the 4HPPD family. As to quaternary structure, homodimer. Fe cation is required as a cofactor.

The protein localises to the cytoplasm. The protein resides in the endoplasmic reticulum membrane. It is found in the golgi apparatus membrane. It carries out the reaction 3-(4-hydroxyphenyl)pyruvate + O2 = homogentisate + CO2. It functions in the pathway amino-acid degradation; L-phenylalanine degradation; acetoacetate and fumarate from L-phenylalanine: step 3/6. In terms of biological role, catalyzes the conversion of 4-hydroxyphenylpyruvic acid to homogentisic acid, one of the steps in tyrosine catabolism. This chain is 4-hydroxyphenylpyruvate dioxygenase (Hpd), found in Mus musculus (Mouse).